The primary structure comprises 101 residues: uncharacterized protein (101 aa).

The protein resides in the mitochondrion. This is an uncharacterized protein from Arabidopsis thaliana (Mouse-ear cress).